A 52-amino-acid polypeptide reads, in one-letter code: Stable plasmid inheritance protein (52 aa).

Residues 6-26 (SSLVWCVLIVCLTLLIFTYLT) traverse the membrane as a helical segment.

It belongs to the Hok/Gef family.

Its subcellular location is the cell inner membrane. Functionally, toxic component of a type I toxin-antitoxin (TA) system. Part of the plasmid maintenance system, encodes a toxic protein that collapses the transmembrane potential and arrests respiration. When the adjacent non-translated flmB (sok) gene is disrupted FlmA no longer functions in plasmid maintenance (i.e. FlmB probably encodes an antisense antitoxin RNA). Translation of FlmA may be coupled to the upstream flmC gene. The polypeptide is Stable plasmid inheritance protein (flmA) (Escherichia coli O157:H7).